Reading from the N-terminus, the 424-residue chain is Gamma-glutamyl phosphate reductase (424 aa).

The disordered stretch occupies residues Met1 to Ala27.

It belongs to the gamma-glutamyl phosphate reductase family.

It is found in the cytoplasm. The catalysed reaction is L-glutamate 5-semialdehyde + phosphate + NADP(+) = L-glutamyl 5-phosphate + NADPH + H(+). It functions in the pathway amino-acid biosynthesis; L-proline biosynthesis; L-glutamate 5-semialdehyde from L-glutamate: step 2/2. Catalyzes the NADPH-dependent reduction of L-glutamate 5-phosphate into L-glutamate 5-semialdehyde and phosphate. The product spontaneously undergoes cyclization to form 1-pyrroline-5-carboxylate. The polypeptide is Gamma-glutamyl phosphate reductase (Mycolicibacterium smegmatis (strain ATCC 700084 / mc(2)155) (Mycobacterium smegmatis)).